The sequence spans 444 residues: Divalent metal cation transporter MntH (444 aa).

A run of 11 helical transmembrane segments spans residues 31 to 51 (GGHW…VSVG), 68 to 88 (FGYL…VLQG), 115 to 135 (LALW…EVIG), 146 to 166 (IPLT…LLLM), 175 to 195 (AFVM…IALA), 212 to 232 (VVTN…TVMP), 267 to 287 (VALM…AAVF), 303 to 323 (ALLA…VALL), 356 to 376 (LLTR…YGEA), 381 to 401 (LLVL…IPLV), and 413 to 433 (LVAP…IVGL).

Belongs to the NRAMP family.

It is found in the cell inner membrane. Functionally, h(+)-stimulated, divalent metal cation uptake system. The protein is Divalent metal cation transporter MntH of Xanthomonas campestris pv. campestris (strain ATCC 33913 / DSM 3586 / NCPPB 528 / LMG 568 / P 25).